The following is a 478-amino-acid chain: Probable serine protease do-like (478 aa).

Positions 1 to 26 (MKKSAIILSKIILILTLLLSFGMSWN) are cleaved as a signal peptide. Cys87 and Cys99 are joined by a disulfide. The segment at 116–254 (GSGVIINADK…LKGELIGINT (139 aa)) is serine protease. Residues His133, Asp163, and Ser238 each act as charge relay system in the active site. PDZ domains are found at residues 281-372 (QMVQ…VFRE) and 387-469 (KHNL…IKRG).

Belongs to the peptidase S1C family.

This Buchnera aphidicola subsp. Acyrthosiphon pisum (strain APS) (Acyrthosiphon pisum symbiotic bacterium) protein is Probable serine protease do-like (degP).